We begin with the raw amino-acid sequence, 569 residues long: Atlastin-2 (569 aa).

The N-terminal hypervariable region (HVR) stretch occupies residues 1–49 (MAEGGSLRNRTRFGSRSNEAMNHVDYPDENFVEEIQLNSDTEVMEKPRP). At 1–464 (MAEGGSLRNR…NIFYAARTPA (464 aa)) the chain is on the cytoplasmic side. A GB1/RHD3-type G domain is found at 80-324 (DLNVVVLSVA…LVPLLLAPEN (245 aa)). GDP-binding residues include Arg-93, Lys-94, Gly-95, Lys-96, Ser-97, Phe-98, Gln-163, Arg-232, and Asp-233. GTP is bound by residues Arg-93, Lys-94, Gly-95, Lys-96, Ser-97, and Phe-98. Ser-97 provides a ligand contact to Mg(2+). Residues Arg-232 and Asp-233 each contribute to the GTP site. Positions 244–272 (LEGGNKFLEKRLQVKQNQHEELQNVRKHI) form a coiled coil. Positions 291 and 294 each coordinate GDP. Val-291 provides a ligand contact to GTP. The segment at 362-453 (MLQATAEANN…YANFLKHNDG (92 aa)) is 3HB (three-helix bundle) domain. The interval 454–462 (KNIFYAART) is linker. Residues 465–485 (TLFAVMFAMYIISGLTGFIGM) traverse the membrane as a helical segment. Topologically, residues 486 to 487 (NS) are lumenal. A helical membrane pass occupies residues 488–508 (IATICNLIMGLTLLSFCTWAY). Residues 509 to 569 (VKYSGEFREL…DQVSGRLKTN (61 aa)) lie on the Cytoplasmic side of the membrane. The segment at 535–569 (KPLSDNLMEDNIRQTVRNSIKAGLTDQVSGRLKTN) is autoinhibitory domain.

This sequence belongs to the TRAFAC class dynamin-like GTPase superfamily. GB1/RHD3 GTPase family. GB1 subfamily. Monomeric and homodimeric. The homodimer, transiently formed by two molecules on opposing membranes, is the active form mediating ER membrane fusion.

Its subcellular location is the endoplasmic reticulum membrane. The catalysed reaction is GTP + H2O = GDP + phosphate + H(+). In terms of biological role, atlastin-2 (ATL2) is a membrane-anchored GTPase that mediates the GTP-dependent fusion of endoplasmic reticulum (ER) membranes, maintaining the continuous ER network. It facilitates the formation of three-way junctions where ER tubules intersect. Two atlastin-2 on neighboring ER tubules bind GTP and form loose homodimers through the GB1/RHD3-type G domains and 3HB regions. Upon GTP hydrolysis, the 3HB regions tighten, pulling the membranes together to drive their fusion. After fusion, the homodimer disassembles upon release of inorganic phosphate (Pi). Subsequently, GDP dissociates, resetting the monomers to a conformation ready for a new fusion cycle. The protein is Atlastin-2 (atl2) of Xenopus laevis (African clawed frog).